A 311-amino-acid chain; its full sequence is Aspartate carbamoyltransferase catalytic subunit (311 aa).

Residues Arg55 and Thr56 each contribute to the carbamoyl phosphate site. Lys85 is a binding site for L-aspartate. Positions 106, 134, and 137 each coordinate carbamoyl phosphate. L-aspartate is bound by residues Arg167 and Arg228. Carbamoyl phosphate-binding residues include Leu266 and Pro267.

This sequence belongs to the aspartate/ornithine carbamoyltransferase superfamily. ATCase family. In terms of assembly, heterododecamer (2C3:3R2) of six catalytic PyrB chains organized as two trimers (C3), and six regulatory PyrI chains organized as three dimers (R2).

It carries out the reaction carbamoyl phosphate + L-aspartate = N-carbamoyl-L-aspartate + phosphate + H(+). Its pathway is pyrimidine metabolism; UMP biosynthesis via de novo pathway; (S)-dihydroorotate from bicarbonate: step 2/3. Catalyzes the condensation of carbamoyl phosphate and aspartate to form carbamoyl aspartate and inorganic phosphate, the committed step in the de novo pyrimidine nucleotide biosynthesis pathway. The protein is Aspartate carbamoyltransferase catalytic subunit of Psychromonas ingrahamii (strain DSM 17664 / CCUG 51855 / 37).